Consider the following 795-residue polypeptide: Inactive N-acetylated-alpha-linked acidic dipeptidase-like protein 2 (795 aa).

The interval 1 to 38 is disordered; sequence MGENEASLPNTSLQGKKMAYQKVHADQRAPGHSQYLDN. Over 1 to 121 the chain is Cytoplasmic; that stretch reads MGENEASLPN…RSAPKSNRCN (121 aa). Serine 92 is subject to Phosphoserine. A helical; Signal-anchor for type II membrane protein transmembrane segment spans residues 122–142; that stretch reads FCHVLKILCTATILFIFGILI. The Extracellular segment spans residues 143-795; the sequence is GYYVHTNCPS…VFKSVLDGKN (653 aa). N-linked (GlcNAc...) asparagine glycosylation is found at asparagine 295, asparagine 373, asparagine 534, and asparagine 759.

This sequence belongs to the peptidase M28 family. M28B subfamily. In terms of tissue distribution, expressed at higher level in kidney and placenta. In embryo, it is mainly confined to duodenal and stomach endoderm, mesonephros, metanephros and pancreas.

The protein localises to the membrane. Its function is as follows. May be catalytically inactive. In Homo sapiens (Human), this protein is Inactive N-acetylated-alpha-linked acidic dipeptidase-like protein 2 (NAALADL2).